The chain runs to 209 residues: Glutathione S-transferase D1 (209 aa).

Residues 1–81 form the GST N-terminal domain; sequence MVDFYYLPGS…YLVEKYGKTD (81 aa). Glutathione is bound by residues Ser-10, 51-53, and 65-67; these read HTI and ESR. The 122-residue stretch at 87-208 folds into the GST C-terminal domain; it reads CPKKRAVINQ…AGCLEFKKYF (122 aa).

The protein belongs to the GST superfamily. Delta family. As to quaternary structure, homodimer.

It catalyses the reaction RX + glutathione = an S-substituted glutathione + a halide anion + H(+). The enzyme catalyses 1,1,1-trichloro-2,2-bis(4-chlorophenyl)ethane = 1,1-dichloro-2,2-bis(4-chlorophenyl)ethylene + chloride + H(+). Its function is as follows. Conjugation of reduced glutathione to a wide number of exogenous and endogenous hydrophobic electrophiles. Has DDT dehydrochlorinase activity. May be involved in detoxification. In Drosophila melanogaster (Fruit fly), this protein is Glutathione S-transferase D1.